Here is a 477-residue protein sequence, read N- to C-terminus: Calcium uptake protein 1, mitochondrial (477 aa).

A mitochondrion-targeting transit peptide spans 1 to 33; sequence MFRLNALSALAELAVGSRWYHGTSQPTQTKRRL. Residues 55-108 form a disordered region; it reads AHAESPPSVNSKKTDAGDKGKSKDTREVSSHEGSAADTAAEPYPEEKKKKRSGF. The segment covering 66 to 84 has biased composition (basic and acidic residues); that stretch reads KKTDAGDKGKSKDTREVSS. The polybasic region stretch occupies residues 101-112; it reads KKKKRSGFRDRK. At Ser-124 the chain carries Phosphoserine. Residues 128–131 are k/R-ring; the sequence is KIFR. The 36-residue stretch at 220-255 folds into the EF-hand 1 domain; it reads TPQRNFEIAFKMFDLNGDGEVDMEEFEQVQSIIRSQ. Ca(2+) is bound by residues Asp-233, Asn-235, Asp-237, Glu-239, and Glu-244. Positions 261–265 are k/R-ring; sequence RHRDR. The region spanning 356–376 is the EF-hand 2; degenerate domain; the sequence is KDGKGLTFQEVENFFTFLKNI. The region spanning 410–445 is the EF-hand 3 domain; that stretch reads LSDHVCDVVFALFDCDGNGELSNKEFVSIMKQRLMR. Ca(2+) is bound by residues Asp-423, Asp-425, Asn-427, Glu-429, and Glu-434. Position 457 is an asymmetric dimethylarginine (Arg-457). Residues 457-467 are C-helix region; sequence RLMQAMWKCAQ.

Belongs to the MICU1 family. MICU1 subfamily. In terms of assembly, heterodimer; disulfide-linked; heterodimerizes with MICU2 or MICU3. Homodimer; disulfide-linked. Component of the uniplex complex, composed of MCU, EMRE/SMDT1, MICU1 and MICU2 (or MICU3) in a 4:4:1:1 stoichiometry. The composition of calcium sensors within the uniplex complex can differ depending on tissues: a MICU1 homodimer can be present instead of the MICU1-MICU2 heterodimer in skeletal-muscle and kidney. MICU1 is recruited to the uniplex complex by EMRE/SMDT1, and it associates with MCU at low calcium levels, occluding the pore of the MCU channel. Associates with the MICOS complex. Interacts with SLC25A23. Interacts with CHCHD4/MIA40; which introduces the interchain disulfide bond with MICU2. Interacts (when methylated) with UCP2; leading to decrease the calcium sensitivity of MICU1. Post-translationally, phosphorylation at Ser-124 by AKT1 impairs its maturation and stability. Asymmetric dimethylation at Arg-457 by PRMT1 decreases the calcium sensitivity of MICU1 by promoting interaction with UCP2. In terms of processing, degraded by YME1L1 when not complexed as homodimer or heterodimer. Not degraded when complexed as homodimer or heterodimer; the presence of the interchain disulfide bond protecting MICU1 from degradation by YME1L1.

It localises to the mitochondrion intermembrane space. Its subcellular location is the mitochondrion inner membrane. Functionally, calcium sensor of the mitochondrial calcium uniporter (MCU) channel, which senses calcium level via its EF-hand domains. MICU1 and MICU2 (or MICU3) form a disulfide-linked heterodimer that stimulates and inhibits MCU activity, depending on the concentration of calcium. At low calcium levels, MICU1 occludes the pore of the MCU channel, preventing mitochondrial calcium uptake. At higher calcium levels, calcium-binding to MICU1 and MICU2 (or MICU3) induces a conformational change that weakens MCU-MICU1 interactions and moves the MICU1-MICU2 heterodimer away from the pore, allowing calcium permeation through the MCU channel. Also required to protect against manganese toxicity by preventing manganese uptake by MCU: mechanistically, manganese-binding to its EF-hand domains does not induce any conformational change, maintaining MCU pore occlusion. Acts as a regulator of mitochondrial cristae structure independently of its ability to regulate the mitochondrial calcium uniporter channel. Regulates glucose-dependent insulin secretion in pancreatic beta-cells by regulating mitochondrial calcium uptake. Induces T-helper 1-mediated autoreactivity, which is accompanied by the release of IFNG. This chain is Calcium uptake protein 1, mitochondrial (Micu1), found in Rattus norvegicus (Rat).